The chain runs to 234 residues: Octanoyltransferase (234 aa).

The region spanning 50-234 is the BPL/LPL catalytic domain; the sequence is GEAPELVWLL…AFEQVFGPTR (185 aa). Residues 88–95, 163–165, and 176–178 contribute to the substrate site; these read RGGQITYH, AIG, and GIA. Residue Cys-194 is the Acyl-thioester intermediate of the active site.

This sequence belongs to the LipB family.

It is found in the cytoplasm. It carries out the reaction octanoyl-[ACP] + L-lysyl-[protein] = N(6)-octanoyl-L-lysyl-[protein] + holo-[ACP] + H(+). Its pathway is protein modification; protein lipoylation via endogenous pathway; protein N(6)-(lipoyl)lysine from octanoyl-[acyl-carrier-protein]: step 1/2. In terms of biological role, catalyzes the transfer of endogenously produced octanoic acid from octanoyl-acyl-carrier-protein onto the lipoyl domains of lipoate-dependent enzymes. Lipoyl-ACP can also act as a substrate although octanoyl-ACP is likely to be the physiological substrate. The protein is Octanoyltransferase of Rhodopseudomonas palustris (strain BisA53).